The sequence spans 316 residues: Probable prolyl 4-hydroxylase 7 (316 aa).

The Cytoplasmic segment spans residues 1–4; sequence MDSR. The chain crosses the membrane as a helical; Signal-anchor for type II membrane protein span at residues 5 to 24; the sequence is IFLAFSLCFLFTLPLISSAP. Topologically, residues 25–316 are lumenal; sequence NRFLTRSSNT…CRKSCKACSS (292 aa). N-linked (GlcNAc...) asparagine glycosylation is present at N96. The Fe2OG dioxygenase domain maps to 139-261; the sequence is NGESMQILHY…KWSATRWIHV (123 aa). 2 residues coordinate Fe cation: H157 and D159. N233 carries N-linked (GlcNAc...) asparagine glycosylation. A Fe cation-binding site is contributed by H242. A 2-oxoglutarate-binding site is contributed by K252. One can recognise a ShKT domain in the interval 274 to 314; sequence CMDENVSCEKWAKAGECQKNPTYMVGSDKDHGYCRKSCKAC. 3 disulfides stabilise this stretch: C274–C314, C281–C307, and C290–C311. N278 carries an N-linked (GlcNAc...) asparagine glycan.

It belongs to the P4HA family. It depends on Fe(2+) as a cofactor. L-ascorbate serves as cofactor.

It localises to the endoplasmic reticulum membrane. The enzyme catalyses L-prolyl-[collagen] + 2-oxoglutarate + O2 = trans-4-hydroxy-L-prolyl-[collagen] + succinate + CO2. Its function is as follows. Catalyzes the post-translational formation of 4-hydroxyproline in -Xaa-Pro-Gly- sequences in proline-rich peptide sequences of plant glycoproteins and other proteins. Hydroxyprolines are important constituent of many plant cell wall glycoproteins such as extensins, hydroxyproline-rich glycoproteins, lectins and arabinogalactan proteins. In Arabidopsis thaliana (Mouse-ear cress), this protein is Probable prolyl 4-hydroxylase 7.